A 217-amino-acid polypeptide reads, in one-letter code: Adenylate kinase (217 aa).

ATP is bound at residue 10 to 15 (GAGKGT). The tract at residues 30-59 (STGDMFRAAIKAGTALGMKAKEYMDAGSLV) is NMP. Residues threonine 31, arginine 36, 57-59 (SLV), 85-88 (GFPR), and glutamine 92 contribute to the AMP site. The LID stretch occupies residues 126-163 (GRRICRQCGGTYHMVFNPPAAEAVCDKCGGELYQRSDD). Arginine 127 contributes to the ATP binding site. Residues cysteine 130 and cysteine 133 each coordinate Zn(2+). An ATP-binding site is contributed by 136–137 (TY). Zn(2+) contacts are provided by cysteine 150 and cysteine 153. AMP is bound by residues arginine 160 and arginine 171. Residue glutamine 199 participates in ATP binding.

The protein belongs to the adenylate kinase family. In terms of assembly, monomer.

The protein resides in the cytoplasm. The catalysed reaction is AMP + ATP = 2 ADP. The protein operates within purine metabolism; AMP biosynthesis via salvage pathway; AMP from ADP: step 1/1. Catalyzes the reversible transfer of the terminal phosphate group between ATP and AMP. Plays an important role in cellular energy homeostasis and in adenine nucleotide metabolism. The chain is Adenylate kinase from Desulfitobacterium hafniense (strain DSM 10664 / DCB-2).